The primary structure comprises 889 residues: Cytoplasmic aconitate hydratase (889 aa).

Substrate is bound by residues Q86 and 205–207; that span reads DSH. Residues C437, C503, and C506 each coordinate [4Fe-4S] cluster. Residues R536 and R541 each coordinate substrate. T628 carries the post-translational modification Phosphothreonine. Residues R699 and 779 to 780 each bind substrate; that span reads SR.

Belongs to the aconitase/IPM isomerase family. In terms of assembly, interacts (when associated with the 4Fe-4S) with FBXL5. Interacts with frataxin(81-210). The cofactor is [4Fe-4S] cluster.

It localises to the cytoplasm. The protein resides in the cytosol. The catalysed reaction is citrate = D-threo-isocitrate. In terms of biological role, bifunctional iron sensor that switches between 2 activities depending on iron availability. Iron deprivation, promotes its mRNA binding activity through which it regulates the expression of genes involved in iron uptake, sequestration and utilization. Binds to iron-responsive elements (IRES) in the untranslated region of target mRNAs preventing for instance the translation of ferritin and aminolevulinic acid synthase and stabilizing the transferrin receptor mRNA. Functionally, conversely, when cellular iron levels are high, binds a 4Fe-4S cluster which precludes RNA binding activity and promotes the aconitase activity, the isomerization of citrate to isocitrate via cis-aconitate. The protein is Cytoplasmic aconitate hydratase (ACO1) of Homo sapiens (Human).